Consider the following 336-residue polypeptide: Torsin-1B (336 aa).

The signal sequence occupies residues 1–24; sequence MLRAGWLRGAAALALLLAARVVAA. Asparagine 64 carries N-linked (GlcNAc...) asparagine glycosylation. An ATP-binding site is contributed by 109–116; that stretch reads GWAGTGKN. Asparagine 165 carries an N-linked (GlcNAc...) asparagine glycan.

The protein belongs to the ClpA/ClpB family. Torsin subfamily. As to quaternary structure, homohexamer. Interacts with TOR1A; the interaction may be specific of neural tissues. Interacts with TOR1AIP1; TOR1AIP1 is required for TOR1B location on the nuclear membrane. Interacts (ATP-bound) with TOR1AIP2; important for endoplasmic reticulum integrity. Post-translationally, N-glycosylated. As to expression, widely expressed with low levels in brain.

The protein resides in the endoplasmic reticulum lumen. It is found in the nucleus membrane. The enzyme catalyses ATP + H2O = ADP + phosphate + H(+). In terms of biological role, may serve as a molecular chaperone assisting in the proper folding of secreted and/or membrane proteins. Plays a role in non-neural cells nuclear envelope and endoplasmic reticulum integrity. May have a redundant function with TOR1A in non-neural tissues. This is Torsin-1B (TOR1B) from Homo sapiens (Human).